The sequence spans 155 residues: Putative pre-16S rRNA nuclease (155 aa).

The disordered stretch occupies residues 136-155; that stretch reads DAERATSRPPGHPVEPRIGP.

Belongs to the YqgF nuclease family.

It localises to the cytoplasm. Could be a nuclease involved in processing of the 5'-end of pre-16S rRNA. The protein is Putative pre-16S rRNA nuclease of Leifsonia xyli subsp. xyli (strain CTCB07).